Consider the following 76-residue polypeptide: Vasotab-TY2 (76 aa).

Residues 1 to 21 (MKFALFSVLVLMLIATFVAAD) form the signal peptide. Residues 22-76 (DCPRICTADYTPVCGTPSGGRRSANRTFANQCGLDSHNCLNKGATYDKLHDGECK) enclose the Kazal-like domain. Cystine bridges form between Cys23–Cys60, Cys27–Cys53, and Cys35–Cys75.

In terms of tissue distribution, expressed by the salivary gland.

The protein localises to the secreted. In terms of biological role, vasodilator protein that inhibits vasoconstriction of isolated rat femoral artery induced by phenylephrine. Since platelet aggregation and vasoconstriction are key hemostatic responses, particularly in small wounds, this protein likely participates in the antihemostatic responses during blood feeding. Blocks L-type calcium channels (Cav1/CACNA1) in left ventricular myocytes isolated from rat hearts. The sequence is that of Vasotab-TY2 from Tabanus yao (Horsefly).